The chain runs to 563 residues: Anaerobic glycerol-3-phosphate dehydrogenase subunit A (563 aa).

20 to 48 (DVIIIGGGATGAGIARDCALRGIDCILLE) serves as a coordination point for FAD.

Belongs to the FAD-dependent glycerol-3-phosphate dehydrogenase family. Composed of a catalytic GlpA/B dimer and of membrane bound GlpC. Requires FAD as cofactor. FMN is required as a cofactor.

Its subcellular location is the cell inner membrane. The enzyme catalyses a quinone + sn-glycerol 3-phosphate = dihydroxyacetone phosphate + a quinol. It functions in the pathway polyol metabolism; glycerol degradation via glycerol kinase pathway; glycerone phosphate from sn-glycerol 3-phosphate (anaerobic route): step 1/1. The polypeptide is Anaerobic glycerol-3-phosphate dehydrogenase subunit A (glpA) (Haemophilus influenzae (strain ATCC 51907 / DSM 11121 / KW20 / Rd)).